The primary structure comprises 860 residues: DNA primase (860 aa).

A CHC2-type zinc finger spans residues 804 to 842 (CLNRQHRGNRDNVLVYIQLKADGNRLILILWSTCFATKC).

The protein belongs to the herpesviridae DNA primase family. As to quaternary structure, associates with the helicase and the primase-associated factor to form the helicase-primase factor.

Its subcellular location is the host nucleus. Functionally, essential component of the helicase/primase complex. Unwinds the DNA at the replication forks and generates single-stranded DNA for both leading and lagging strand synthesis. The primase initiates primer synthesis and thereby produces large amount of short RNA primers on the lagging strand that the polymerase elongates using dNTPs. This chain is DNA primase (U43), found in Homo sapiens (Human).